The primary structure comprises 476 residues: Bifunctional protein HldE (476 aa).

A ribokinase region spans residues 1–318 (MKPTLPNYDQ…AEAIHGSQDS (318 aa)). 195 to 198 (NMLE) is an ATP binding site. Asp264 is a catalytic residue. Residues 344–476 (MTNGCFDILH…IIEAIKGGRG (133 aa)) are cytidylyltransferase.

It in the N-terminal section; belongs to the carbohydrate kinase PfkB family. This sequence in the C-terminal section; belongs to the cytidylyltransferase family. Homodimer.

It carries out the reaction D-glycero-beta-D-manno-heptose 7-phosphate + ATP = D-glycero-beta-D-manno-heptose 1,7-bisphosphate + ADP + H(+). The catalysed reaction is D-glycero-beta-D-manno-heptose 1-phosphate + ATP + H(+) = ADP-D-glycero-beta-D-manno-heptose + diphosphate. The protein operates within nucleotide-sugar biosynthesis; ADP-L-glycero-beta-D-manno-heptose biosynthesis; ADP-L-glycero-beta-D-manno-heptose from D-glycero-beta-D-manno-heptose 7-phosphate: step 1/4. Its pathway is nucleotide-sugar biosynthesis; ADP-L-glycero-beta-D-manno-heptose biosynthesis; ADP-L-glycero-beta-D-manno-heptose from D-glycero-beta-D-manno-heptose 7-phosphate: step 3/4. Functionally, catalyzes the phosphorylation of D-glycero-D-manno-heptose 7-phosphate at the C-1 position to selectively form D-glycero-beta-D-manno-heptose-1,7-bisphosphate. Its function is as follows. Catalyzes the ADP transfer from ATP to D-glycero-beta-D-manno-heptose 1-phosphate, yielding ADP-D-glycero-beta-D-manno-heptose. In Aliivibrio salmonicida (strain LFI1238) (Vibrio salmonicida (strain LFI1238)), this protein is Bifunctional protein HldE.